A 369-amino-acid polypeptide reads, in one-letter code: Histone deacetylase 8 (369 aa).

Residues leucine 5 to glycine 316 form a histone deacetylase region. Substrate is bound at residue aspartate 93. The Proton acceptor role is filled by histidine 135. Residue glycine 143 participates in substrate binding. Aspartate 170, histidine 172, and aspartate 259 together coordinate a divalent metal cation. Tyrosine 298 serves as a coordination point for substrate.

Belongs to the histone deacetylase family. HD type 1 subfamily. It depends on a divalent metal cation as a cofactor.

The protein resides in the nucleus. It is found in the chromosome. Its subcellular location is the cytoplasm. It carries out the reaction N(6)-acetyl-L-lysyl-[histone] + H2O = L-lysyl-[histone] + acetate. It catalyses the reaction N(6)-acetyl-L-lysyl-[protein] + H2O = L-lysyl-[protein] + acetate. The catalysed reaction is N(6)-(2E)-butenoyl-L-lysyl-[protein] + H2O = (2E)-2-butenoate + L-lysyl-[protein]. Its activity is regulated as follows. Its activity is inhibited by trichostatin A (TSA) and butyrate, 2 well known histone deacetylase inhibitors. Histone deacetylase that catalyzes the deacetylation of lysine residues on the N-terminal part of the core histones (H2A, H2B, H3 and H4). Histone deacetylation gives a tag for epigenetic repression and plays an important role in transcriptional regulation, cell cycle progression and developmental events. Histone deacetylases act via the formation of large multiprotein complexes. Also involved in the deacetylation of non-histone proteins. In addition to protein deacetylase activity, also has protein-lysine deacylase activity: acts as a protein decrotonylase by mediating decrotonylation ((2E)-butenoyl) of histones. The protein is Histone deacetylase 8 (hdac8) of Xenopus tropicalis (Western clawed frog).